The sequence spans 341 residues: Guanine nucleotide-binding protein subunit beta (341 aa).

WD repeat units lie at residues 54–93 (GHLAKIYAMHWASDSRNLVSASQDGKLIVWDGYTTNKVHA), 96–135 (LRSSWVMTCAYAPSGSYVACGGLDNICSIYSLKTREGNVR), 142–180 (GHTGYLSCCRFLDDNQIVTSSGDMSCALWDIETGQQTTA), 183–222 (GHTGDVMSLSLSPDMRTFVSGACDASAKLWDIRDGMCKQT), 225–264 (GHESDINAITYFPNGYAFATGSDDATCRLFDIRADQEIGM), 269–308 (NIICGITSVAFSKSGRLLLGGYDDFNCNVWDVLRQERAGV), and 311–341 (GHDNRVSCLGVTEDGMAVATGSWDSFLRIWN).

This sequence belongs to the WD repeat G protein beta family. In terms of assembly, g proteins are composed of 3 units, alpha, beta and gamma. The G protein beta1-gamma2 dimer interacts with calmodulin. In terms of tissue distribution, abundantly expressed in gills, gonad and mantle and at lower levels in digestion gland. Not detected in muscle.

It localises to the cytoplasm. Functionally, guanine nucleotide-binding proteins (G proteins) are involved as a modulator or transducer in various transmembrane signaling systems. The beta and gamma chains are required for the GTPase activity, for replacement of GDP by GTP, and for G protein-effector interaction. This chain is Guanine nucleotide-binding protein subunit beta, found in Pinctada fucata (Akoya pearl oyster).